The primary structure comprises 369 residues: Homoserine O-succinyltransferase (369 aa).

A disordered region spans residues 1-21 (MVRIVPSARRTRAPAKLDGRS). The region spanning 86 to 350 (VVFVAGGISA…PFGHDAFLKE (265 aa)) is the AB hydrolase-1 domain. Residues 92–95 (GISA) form an important for substrate specificity region. S172 acts as the Nucleophile in catalysis. R233 provides a ligand contact to substrate. Catalysis depends on residues D314 and H344. D345 contributes to the substrate binding site.

This sequence belongs to the AB hydrolase superfamily. MetX family. In terms of assembly, homodimer.

Its subcellular location is the cytoplasm. The catalysed reaction is L-homoserine + succinyl-CoA = O-succinyl-L-homoserine + CoA. It participates in amino-acid biosynthesis; L-methionine biosynthesis via de novo pathway; O-succinyl-L-homoserine from L-homoserine: step 1/1. Functionally, transfers a succinyl group from succinyl-CoA to L-homoserine, forming succinyl-L-homoserine. The polypeptide is Homoserine O-succinyltransferase (Xanthomonas campestris pv. campestris (strain ATCC 33913 / DSM 3586 / NCPPB 528 / LMG 568 / P 25)).